The following is a 314-amino-acid chain: Acetaldehyde dehydrogenase 1 (314 aa).

NAD(+) is bound at residue 11–14 (SGNI). The active-site Acyl-thioester intermediate is the cysteine 129. Residues 160–168 (SAGPGTRAN) and asparagine 292 contribute to the NAD(+) site.

It belongs to the acetaldehyde dehydrogenase family.

The catalysed reaction is acetaldehyde + NAD(+) + CoA = acetyl-CoA + NADH + H(+). The protein is Acetaldehyde dehydrogenase 1 of Nocardioides sp. (strain ATCC BAA-499 / JS614).